Consider the following 380-residue polypeptide: MYG1 exonuclease (380 aa).

The transit peptide at 1–46 (MGRRFLRGILTLPLRSVLQAQHRMLGSEQDPPAKRPRNNLMAPPRI) directs the protein to the mitochondrion. Lys266 and Lys272 each carry N6-acetyllysine.

Belongs to the MYG1 family. As to expression, ubiquitously expressed, with highest levels in testis.

It is found in the nucleus. The protein localises to the nucleoplasm. It localises to the mitochondrion matrix. The protein resides in the nucleolus. Functionally, 3'-5' RNA exonuclease which cleaves in situ on specific transcripts in both nucleus and mitochondrion. Involved in regulating spatially segregated organellar RNA processing, acts as a coordinator of nucleo-mitochondrial crosstalk. In nucleolus, processes pre-ribosomal RNA involved in ribosome assembly and alters cytoplasmic translation. In mitochondrial matrix, processes 3'-termini of the mito-ribosomal and messenger RNAs and controls translation of mitochondrial proteins. The sequence is that of MYG1 exonuclease from Mus musculus (Mouse).